The chain runs to 1024 residues: RNA cytidine acetyltransferase (1024 aa).

Residue 287-296 participates in ATP binding; that stretch reads GRGKSAALGL. Lys426 carries the post-translational modification N6-acetyllysine. Arg470 contacts ATP. Residues 558–753 form the N-acetyltransferase domain; the sequence is CLLPPVPPTQ…HSCIMLKTLA (196 aa). Residues 629–631 and 636–642 contribute to the acetyl-CoA site; these read IAV and QGMGYGS. A required for localization to the nucleolus and midbody region spans residues 702 to 1024; it reads PAERLDYLGV…RKDMKLKRKK (323 aa). At Thr716 the chain carries Phosphothreonine. Residue Arg725 participates in acetyl-CoA binding. Residues Ser934, Ser984, and Ser987 each carry the phosphoserine modification. The tract at residues 990–1024 is disordered; the sequence is SDKKRKLETKQEPKQSKKLKKRDNNRKDMKLKRKK. Residues 1005–1024 show a composition bias toward basic residues; that stretch reads SKKLKKRDNNRKDMKLKRKK.

Belongs to the RNA cytidine acetyltransferase family. NAT10 subfamily. In terms of assembly, part of the small subunit (SSU) processome, composed of more than 70 proteins and the RNA chaperone small nucleolar RNA (snoRNA) U3. Interacts with THUMPD1. Interacts with SUN1 (via N-terminus). Interacts with TERT.

Its subcellular location is the nucleus. It is found in the nucleolus. It carries out the reaction a cytidine in 18S rRNA + acetyl-CoA + ATP + H2O = an N(4)-acetylcytidine in 18S rRNA + ADP + phosphate + CoA + H(+). The catalysed reaction is a cytidine in tRNA + acetyl-CoA + ATP + H2O = an N(4)-acetylcytidine in tRNA + ADP + phosphate + CoA + H(+). It catalyses the reaction a cytidine in mRNA + acetyl-CoA + ATP + H2O = an N(4)-acetylcytidine in mRNA + ADP + phosphate + CoA + H(+). RNA cytidine acetyltransferase that catalyzes the formation of N(4)-acetylcytidine (ac4C) modification on mRNAs, 18S rRNA and tRNAs. Catalyzes ac4C modification of a broad range of mRNAs, enhancing mRNA stability and translation. mRNA ac4C modification is frequently present within wobble cytidine sites and promotes translation efficiency. Mediates the formation of ac4C at position 1842 in 18S rRNA. May also catalyze the formation of ac4C at position 1337 in 18S rRNA. Required for early nucleolar cleavages of precursor rRNA at sites A0, A1 and A2 during 18S rRNA synthesis. Catalyzes the formation of ac4C in serine and leucine tRNAs. Requires the tRNA-binding adapter protein THUMPD1 for full tRNA acetyltransferase activity but not for 18S rRNA acetylation. In addition to RNA acetyltransferase activity, also able to acetylate lysine residues of proteins, such as histones, microtubules, p53/TP53 and MDM2, in vitro. The relevance of the protein lysine acetyltransferase activity is however unsure in vivo. Activates telomerase activity by stimulating the transcription of TERT, and may also regulate telomerase function by affecting the balance of telomerase subunit assembly, disassembly, and localization. Involved in the regulation of centrosome duplication by acetylating CENATAC during mitosis, promoting SASS6 proteasome degradation. Part of the small subunit (SSU) processome, first precursor of the small eukaryotic ribosomal subunit. During the assembly of the SSU processome in the nucleolus, many ribosome biogenesis factors, an RNA chaperone and ribosomal proteins associate with the nascent pre-rRNA and work in concert to generate RNA folding, modifications, rearrangements and cleavage as well as targeted degradation of pre-ribosomal RNA by the RNA exosome. In Mus musculus (Mouse), this protein is RNA cytidine acetyltransferase.